A 25-amino-acid chain; its full sequence is Caerin 1.1 (25 aa).

Leu-25 carries the post-translational modification Leucine amide.

As to expression, expressed by the skin dorsal glands.

It localises to the secreted. Functionally, antibacterial peptide with wide spectrum of activity. Active against the Gram-positive bacteria B.cereus (MIC=50 ug/ml), E.faecalis (MIC=25 ug/ml), L.lactis (MIC=1.5 ug/ml), L.innocua (MIC=25 ug/ml), S.aureus (MIC=3 ug/ml), S.epidermidis (MIC=12 ug/ml) and S.uberis (MIC=12 ug/ml), and against the Gram-negative bacteria E.coli (MIC=100 ug/ml) and P.multocida (MIC=25 ug/ml). This Litoria peronii (Emerald spotted tree frog) protein is Caerin 1.1.